Reading from the N-terminus, the 83-residue chain is Large ribosomal subunit protein bL31B (83 aa).

The protein belongs to the bacterial ribosomal protein bL31 family. Type B subfamily. As to quaternary structure, part of the 50S ribosomal subunit.

Binds the 23S rRNA. In Lactobacillus delbrueckii subsp. bulgaricus (strain ATCC 11842 / DSM 20081 / BCRC 10696 / JCM 1002 / NBRC 13953 / NCIMB 11778 / NCTC 12712 / WDCM 00102 / Lb 14), this protein is Large ribosomal subunit protein bL31B.